Here is a 651-residue protein sequence, read N- to C-terminus: Acetyl-coenzyme A synthetase (651 aa).

CoA is bound by residues 189-192 (RGGK), Thr311, and Asn335. ATP is bound by residues 387-389 (GEP), 411-416 (DTWWQT), Asp500, and Arg515. Ser523 contributes to the CoA binding site. Arg526 lines the ATP pocket. Residues Val537, His539, and Val542 each contribute to the Mg(2+) site. Position 586 (Arg586) interacts with CoA. Lys611 is modified (N6-acetyllysine).

The protein belongs to the ATP-dependent AMP-binding enzyme family. It depends on Mg(2+) as a cofactor. Acetylated. Deacetylation by the SIR2-homolog deacetylase activates the enzyme.

It catalyses the reaction acetate + ATP + CoA = acetyl-CoA + AMP + diphosphate. Catalyzes the conversion of acetate into acetyl-CoA (AcCoA), an essential intermediate at the junction of anabolic and catabolic pathways. AcsA undergoes a two-step reaction. In the first half reaction, AcsA combines acetate with ATP to form acetyl-adenylate (AcAMP) intermediate. In the second half reaction, it can then transfer the acetyl group from AcAMP to the sulfhydryl group of CoA, forming the product AcCoA. In Brucella melitensis biotype 1 (strain ATCC 23456 / CCUG 17765 / NCTC 10094 / 16M), this protein is Acetyl-coenzyme A synthetase.